The following is a 297-amino-acid chain: Calponin-1 (297 aa).

In terms of domain architecture, Calponin-homology (CH) spans 28–131 (HQREQELREW…STLLALASMA (104 aa)). 3 Calponin-like repeats span residues 164 to 189 (IGLQ…RHLY), 204 to 229 (ISLQ…RQIF), and 243 to 268 (VSLQ…RQVY). Thr170 is modified (phosphothreonine; by ROCK2). The residue at position 175 (Ser175) is a Phosphoserine; by ROCK2. 2 positions are modified to phosphothreonine; by ROCK2: Thr180 and Thr184. Position 259 is a phosphothreonine; by ROCK2 (Thr259).

It belongs to the calponin family. Part of cGMP kinase signaling complex at least composed of ACTA2/alpha-actin, CNN1/calponin H1, PLN/phospholamban, PRKG1 and ITPR1. As to expression, smooth muscle, and tissues containing significant amounts of smooth muscle.

Thin filament-associated protein that is implicated in the regulation and modulation of smooth muscle contraction. It is capable of binding to actin, calmodulin and tropomyosin. The interaction of calponin with actin inhibits the actomyosin Mg-ATPase activity. This chain is Calponin-1 (CNN1), found in Homo sapiens (Human).